A 279-amino-acid chain; its full sequence is 3-methyl-2-oxobutanoate hydroxymethyltransferase (279 aa).

Mg(2+) contacts are provided by Asp44 and Asp83. Residues 44–45 (DS), Asp83, and Lys113 each bind 3-methyl-2-oxobutanoate. A Mg(2+)-binding site is contributed by Glu115. Glu182 acts as the Proton acceptor in catalysis.

It belongs to the PanB family. In terms of assembly, homodecamer; pentamer of dimers. Requires Mg(2+) as cofactor.

It is found in the cytoplasm. It carries out the reaction 3-methyl-2-oxobutanoate + (6R)-5,10-methylene-5,6,7,8-tetrahydrofolate + H2O = 2-dehydropantoate + (6S)-5,6,7,8-tetrahydrofolate. Its pathway is cofactor biosynthesis; (R)-pantothenate biosynthesis; (R)-pantoate from 3-methyl-2-oxobutanoate: step 1/2. Its function is as follows. Catalyzes the reversible reaction in which hydroxymethyl group from 5,10-methylenetetrahydrofolate is transferred onto alpha-ketoisovalerate to form ketopantoate. In Desulfotalea psychrophila (strain LSv54 / DSM 12343), this protein is 3-methyl-2-oxobutanoate hydroxymethyltransferase.